The following is a 44-amino-acid chain: Photosystem I reaction center subunit IX (44 aa).

Residues 7–27 traverse the membrane as a helical segment; it reads YLSVAPVLSTLWFGALAGLLI.

This sequence belongs to the PsaJ family.

The protein resides in the plastid. It localises to the chloroplast thylakoid membrane. May help in the organization of the PsaE and PsaF subunits. The chain is Photosystem I reaction center subunit IX from Oryza nivara (Indian wild rice).